The primary structure comprises 163 residues: Small heat shock protein C1 (163 aa).

The sHSP domain maps to 55-163 (TFYESSSLKS…EQDSREITIN (109 aa)).

It belongs to the small heat shock protein (HSP20) family.

In Rickettsia prowazekii (strain Madrid E), this protein is Small heat shock protein C1 (hspC1).